The sequence spans 139 residues: Short neuropeptide F (139 aa).

The propeptide occupies 1 to 23 (MGRARRTVRAPAQHDALGGHALA). Positions 1–48 (MGRARRTVRAPAQHDALGGHALARKSVRSPSRRLRFGRRSDPDMPPQA) are disordered. Positions 22-37 (LARKSVRSPSRRLRFG) are enriched in basic residues. Phenylalanine amide is present on Phe36. The propeptide occupies 40 to 62 (SDPDMPPQAPLDEMNELLSLREV). A Phenylalanine amide modification is found at Phe70. The propeptide occupies 74–96 (SEERAVPHIFPQEFLTQEQDRAV). Position 105 is a phenylalanine amide (Phe105). The propeptide occupies 109-139 (SDNNMFLLPYESALPQEVKANGSVEDDRQQE).

This sequence belongs to the NPY family. As to expression, sNPF peptide 1: Expressed in corpora cardiaca (CC), corpora allata (CA), antennal lobe (AL) and gnathal ganglion (GNG) (at protein level). Expression in AL detected in all animals, in GNG in most animals, expression in CC and CA in some animals (at protein level). sNPF peptide 2: Expressed in corpora cardiaca (CC), corpora allata (CA), antennal lobe (AL) and gnathal ganglion (GNG) (at protein level). Expression in AL detected in all animals, in GNG, CC and CA in most animals (at protein level). sNPF peptide 3: Expressed in corpora cardiaca (CC), corpora allata (CA), antennal lobe (AL) and gnathal ganglion (GNG) (at protein level). Expression detected in all animals (at protein level).

Its subcellular location is the secreted. Functionally, plays a role in controlling food intake and regulating body size. The chain is Short neuropeptide F from Agrotis ipsilon (Black cutworm moth).